We begin with the raw amino-acid sequence, 121 residues long: Protein ripply2.1 (121 aa).

The tract at residues M1–H69 is disordered. A WRPW motif motif is present at residues W29–W32. Residues H39–H57 are compositionally biased toward polar residues. The interval H69–Y104 is ripply homology domain.

It belongs to the ripply family. As to expression, expressed in the presomitic mesoderm (PSM) in the anterior halves of somitomeres S-0, S-I and S-II and in the newly formed somites.

It is found in the nucleus. Required during somitogenesis to regulate somite differentiation and the positioning of the presomitic mesoderm-front. Represses the expression of genes involved in somite segmentation by acting with the corepressor tle4 to down-regulate the transcriptional activity of tbx6. Also regulates retinoic acid signaling during somitogenesis and is necessary for the expression of aldh1a2/raldh2. The polypeptide is Protein ripply2.1 (ripply2.1) (Xenopus laevis (African clawed frog)).